Consider the following 385-residue polypeptide: UPF0744 protein YSD83 (385 aa).

The protein belongs to the UPF0744 family.

The sequence is that of UPF0744 protein YSD83 (YSD83) from Saccharomyces paradoxus (Yeast).